The following is a 601-amino-acid chain: Elongation factor 4 (601 aa).

A tr-type G domain is found at 7–189 (DNIRNFSIVA…AIVKRLPPPK (183 aa)). Residues 19–24 (DHGKST) and 136–139 (NKVD) contribute to the GTP site.

It belongs to the TRAFAC class translation factor GTPase superfamily. Classic translation factor GTPase family. LepA subfamily.

It localises to the cell inner membrane. The catalysed reaction is GTP + H2O = GDP + phosphate + H(+). Its function is as follows. Required for accurate and efficient protein synthesis under certain stress conditions. May act as a fidelity factor of the translation reaction, by catalyzing a one-codon backward translocation of tRNAs on improperly translocated ribosomes. Back-translocation proceeds from a post-translocation (POST) complex to a pre-translocation (PRE) complex, thus giving elongation factor G a second chance to translocate the tRNAs correctly. Binds to ribosomes in a GTP-dependent manner. The sequence is that of Elongation factor 4 from Methylorubrum populi (strain ATCC BAA-705 / NCIMB 13946 / BJ001) (Methylobacterium populi).